The sequence spans 288 residues: Phenazine biosynthesis-like domain-containing protein (288 aa).

The active site involves glutamate 46.

The protein belongs to the PhzF family. Interacts with UNRIP/MAWD.

In Pongo abelii (Sumatran orangutan), this protein is Phenazine biosynthesis-like domain-containing protein (PBLD).